The chain runs to 258 residues: UDP-N-acetylenolpyruvoylglucosamine reductase (258 aa).

Residue Arg-142 is part of the active site. Ser-184 serves as the catalytic Proton donor. The active site involves Glu-254.

It belongs to the MurB family. FAD is required as a cofactor.

It is found in the cytoplasm. It carries out the reaction UDP-N-acetyl-alpha-D-muramate + NADP(+) = UDP-N-acetyl-3-O-(1-carboxyvinyl)-alpha-D-glucosamine + NADPH + H(+). It participates in cell wall biogenesis; peptidoglycan biosynthesis. Cell wall formation. The polypeptide is UDP-N-acetylenolpyruvoylglucosamine reductase (Campylobacter jejuni (strain RM1221)).